The chain runs to 166 residues: Putative 4-hydroxy-4-methyl-2-oxoglutarate aldolase (166 aa).

Substrate is bound by residues 74-77 and R96; that span reads GDQI. Position 97 (D97) interacts with a divalent metal cation.

It belongs to the class II aldolase/RraA-like family. As to quaternary structure, homotrimer. The cofactor is a divalent metal cation.

The catalysed reaction is 4-hydroxy-4-methyl-2-oxoglutarate = 2 pyruvate. It carries out the reaction oxaloacetate + H(+) = pyruvate + CO2. Catalyzes the aldol cleavage of 4-hydroxy-4-methyl-2-oxoglutarate (HMG) into 2 molecules of pyruvate. Also contains a secondary oxaloacetate (OAA) decarboxylase activity due to the common pyruvate enolate transition state formed following C-C bond cleavage in the retro-aldol and decarboxylation reactions. This is Putative 4-hydroxy-4-methyl-2-oxoglutarate aldolase from Xanthomonas oryzae pv. oryzae (strain MAFF 311018).